The sequence spans 170 residues: Adenine phosphoribosyltransferase (170 aa).

The protein belongs to the purine/pyrimidine phosphoribosyltransferase family. In terms of assembly, homodimer.

Its subcellular location is the cytoplasm. It carries out the reaction AMP + diphosphate = 5-phospho-alpha-D-ribose 1-diphosphate + adenine. Its pathway is purine metabolism; AMP biosynthesis via salvage pathway; AMP from adenine: step 1/1. Its function is as follows. Catalyzes a salvage reaction resulting in the formation of AMP, that is energically less costly than de novo synthesis. This chain is Adenine phosphoribosyltransferase, found in Lysinibacillus sphaericus (strain C3-41).